The primary structure comprises 412 residues: Serine/threonine transporter SstT (412 aa).

The next 10 helical transmembrane spans lie at 16-36, 44-64, 82-102, 115-135, 141-161, 179-199, 217-237, 298-318, 330-350, and 357-377; these read LVAQ…FLPG, LGDL…FVLV, IIVL…LASF, TDVI…FNIV, ALLN…GFAF, VTLI…GLVA, LLVL…LIVF, MGGA…TLGI, LLAA…LLLI, and FGIS…IGVV.

The protein belongs to the dicarboxylate/amino acid:cation symporter (DAACS) (TC 2.A.23) family.

It localises to the cell inner membrane. The enzyme catalyses L-serine(in) + Na(+)(in) = L-serine(out) + Na(+)(out). It carries out the reaction L-threonine(in) + Na(+)(in) = L-threonine(out) + Na(+)(out). Involved in the import of serine and threonine into the cell, with the concomitant import of sodium (symport system). The chain is Serine/threonine transporter SstT from Stutzerimonas stutzeri (strain A1501) (Pseudomonas stutzeri).